A 188-amino-acid polypeptide reads, in one-letter code: Elongation factor P (188 aa).

Lysine 34 is modified (N6-(3,6-diaminohexanoyl)-5-hydroxylysine).

Belongs to the elongation factor P family. In terms of processing, may be beta-lysylated on the epsilon-amino group of Lys-34 by the combined action of EpmA and EpmB, and then hydroxylated on the C5 position of the same residue by EpmC (if this protein is present). Lysylation is critical for the stimulatory effect of EF-P on peptide-bond formation. The lysylation moiety may extend toward the peptidyltransferase center and stabilize the terminal 3-CCA end of the tRNA. Hydroxylation of the C5 position on Lys-34 may allow additional potential stabilizing hydrogen-bond interactions with the P-tRNA.

It localises to the cytoplasm. Its pathway is protein biosynthesis; polypeptide chain elongation. Involved in peptide bond synthesis. Alleviates ribosome stalling that occurs when 3 or more consecutive Pro residues or the sequence PPG is present in a protein, possibly by augmenting the peptidyl transferase activity of the ribosome. Modification of Lys-34 is required for alleviation. This chain is Elongation factor P, found in Pasteurella multocida (strain Pm70).